Reading from the N-terminus, the 443-residue chain is MRYLPKSQSDRDQMLRELGCATIDDLFAPIPAEYRLTRDLAIPRQYGESEILDFFKQRASENANGYSIFIGAGAYNHYRPVVIDSLISRGEWFTAYTPYQPEISQGTLQAIFEFQSMICELTGMEVANASMYDGSTGAAEAIMMAVRLTGRHSAIIANTVHPEYREVIATYAQHQGLPISHVGYNAETGRVDIKALEAAITDQTAAVLIQSPNFFGTIEDVAAIADLVHKKGALLVVSISEALSLGLIKPPSEADIISMESQSFGVPLGYGGPYVGVIATKEKFVRQIPGRLCGQTVDRNGKRGFVLTLSTREQHIRREKATSNICTNQALIALIASIFMTVYGKQGLRELAKQNLAKTAYAVSAFEKAGAKVLFKNSPFFNEFVVQTKSDSRELNDKLISDKIIGGFPLKKFYPELGNSAVWCVTELNAKAAIDAAAKGVAQ.

The protein belongs to the GcvP family. N-terminal subunit subfamily. In terms of assembly, the glycine cleavage system is composed of four proteins: P, T, L and H. In this organism, the P 'protein' is a heterodimer of two subunits.

It catalyses the reaction N(6)-[(R)-lipoyl]-L-lysyl-[glycine-cleavage complex H protein] + glycine + H(+) = N(6)-[(R)-S(8)-aminomethyldihydrolipoyl]-L-lysyl-[glycine-cleavage complex H protein] + CO2. In terms of biological role, the glycine cleavage system catalyzes the degradation of glycine. The P protein binds the alpha-amino group of glycine through its pyridoxal phosphate cofactor; CO(2) is released and the remaining methylamine moiety is then transferred to the lipoamide cofactor of the H protein. This is Probable glycine dehydrogenase (decarboxylating) subunit 1 from Koribacter versatilis (strain Ellin345).